The sequence spans 143 residues: Transcriptional regulator MraZ (143 aa).

SpoVT-AbrB domains are found at residues 5–47 (EYQH…SLEE) and 76–119 (AAEV…DKSK).

This sequence belongs to the MraZ family. As to quaternary structure, forms oligomers.

Its subcellular location is the cytoplasm. It localises to the nucleoid. This is Transcriptional regulator MraZ from Acetivibrio thermocellus (strain ATCC 27405 / DSM 1237 / JCM 9322 / NBRC 103400 / NCIMB 10682 / NRRL B-4536 / VPI 7372) (Clostridium thermocellum).